Here is a 319-residue protein sequence, read N- to C-terminus: Curved DNA-binding protein (319 aa).

The region spanning 5–69 (DYYKILGVEP…QKRAEFDEIR (65 aa)) is the J domain.

Its subcellular location is the cytoplasm. It localises to the nucleoid. Its function is as follows. DNA-binding protein that preferentially recognizes a curved DNA sequence. It is probably a functional analog of DnaJ; displays overlapping activities with DnaJ, but functions under different conditions, probably acting as a molecular chaperone in an adaptive response to environmental stresses other than heat shock. Lacks autonomous chaperone activity; binds native substrates and targets them for recognition by DnaK. Its activity is inhibited by the binding of CbpM. This chain is Curved DNA-binding protein, found in Pseudomonas putida (strain ATCC 700007 / DSM 6899 / JCM 31910 / BCRC 17059 / LMG 24140 / F1).